The primary structure comprises 494 residues: Protein nucleotidyltransferase YdiU (494 aa).

Residues glycine 101, glycine 103, arginine 104, lysine 123, aspartate 135, glycine 136, arginine 186, and arginine 193 each contribute to the ATP site. The active-site Proton acceptor is the aspartate 262. Mg(2+) is bound by residues asparagine 263 and aspartate 272. Residue aspartate 272 participates in ATP binding.

Belongs to the SELO family. Mg(2+) is required as a cofactor. Requires Mn(2+) as cofactor.

It catalyses the reaction L-seryl-[protein] + ATP = 3-O-(5'-adenylyl)-L-seryl-[protein] + diphosphate. The enzyme catalyses L-threonyl-[protein] + ATP = 3-O-(5'-adenylyl)-L-threonyl-[protein] + diphosphate. It carries out the reaction L-tyrosyl-[protein] + ATP = O-(5'-adenylyl)-L-tyrosyl-[protein] + diphosphate. The catalysed reaction is L-histidyl-[protein] + UTP = N(tele)-(5'-uridylyl)-L-histidyl-[protein] + diphosphate. It catalyses the reaction L-seryl-[protein] + UTP = O-(5'-uridylyl)-L-seryl-[protein] + diphosphate. The enzyme catalyses L-tyrosyl-[protein] + UTP = O-(5'-uridylyl)-L-tyrosyl-[protein] + diphosphate. Nucleotidyltransferase involved in the post-translational modification of proteins. It can catalyze the addition of adenosine monophosphate (AMP) or uridine monophosphate (UMP) to a protein, resulting in modifications known as AMPylation and UMPylation. The chain is Protein nucleotidyltransferase YdiU from Chromohalobacter salexigens (strain ATCC BAA-138 / DSM 3043 / CIP 106854 / NCIMB 13768 / 1H11).